We begin with the raw amino-acid sequence, 110 residues long: UPF0145 protein (110 aa).

The protein belongs to the UPF0145 family.

This is UPF0145 protein from Listeria ivanovii.